Here is a 1450-residue protein sequence, read N- to C-terminus: DNA-directed RNA polymerase III subunit rpc1 (1450 aa).

Zn(2+)-binding residues include cysteine 67, cysteine 70, cysteine 77, histidine 80, cysteine 107, cysteine 110, and cysteine 154. The Mg(2+) site is built by aspartate 491, aspartate 493, and aspartate 495. The bridging helix stretch occupies residues 832 to 844 (PTEFFFHTMGGRE).

It belongs to the RNA polymerase beta' chain family. As to quaternary structure, component of the RNA polymerase III (Pol III) complex consisting of 17 subunits.

It is found in the nucleus. The enzyme catalyses RNA(n) + a ribonucleoside 5'-triphosphate = RNA(n+1) + diphosphate. Its function is as follows. DNA-dependent RNA polymerase catalyzes the transcription of DNA into RNA using the four ribonucleoside triphosphates as substrates. Largest and catalytic core component of RNA polymerase III which synthesizes small RNAs, such as 5S rRNA and tRNAs. Forms the polymerase active center together with the second largest subunit. A single-stranded DNA template strand of the promoter is positioned within the central active site cleft of Pol III. A bridging helix emanates from RPC1 and crosses the cleft near the catalytic site and is thought to promote translocation of Pol III by acting as a ratchet that moves the RNA-DNA hybrid through the active site by switching from straight to bent conformations at each step of nucleotide addition. The polypeptide is DNA-directed RNA polymerase III subunit rpc1 (polr3a) (Dictyostelium discoideum (Social amoeba)).